Here is a 236-residue protein sequence, read N- to C-terminus: Phosphoribosylaminoimidazole-succinocarboxamide synthase (236 aa).

This sequence belongs to the SAICAR synthetase family.

It catalyses the reaction 5-amino-1-(5-phospho-D-ribosyl)imidazole-4-carboxylate + L-aspartate + ATP = (2S)-2-[5-amino-1-(5-phospho-beta-D-ribosyl)imidazole-4-carboxamido]succinate + ADP + phosphate + 2 H(+). It functions in the pathway purine metabolism; IMP biosynthesis via de novo pathway; 5-amino-1-(5-phospho-D-ribosyl)imidazole-4-carboxamide from 5-amino-1-(5-phospho-D-ribosyl)imidazole-4-carboxylate: step 1/2. The chain is Phosphoribosylaminoimidazole-succinocarboxamide synthase from Rickettsia africae (strain ESF-5).